A 138-amino-acid chain; its full sequence is Large ribosomal subunit protein uL16 (138 aa).

It belongs to the universal ribosomal protein uL16 family. As to quaternary structure, part of the 50S ribosomal subunit.

Functionally, binds 23S rRNA and is also seen to make contacts with the A and possibly P site tRNAs. In Corynebacterium kroppenstedtii (strain DSM 44385 / JCM 11950 / CIP 105744 / CCUG 35717), this protein is Large ribosomal subunit protein uL16.